The primary structure comprises 84 residues: UPF0473 protein CLI_2624 (84 aa).

It belongs to the UPF0473 family.

The sequence is that of UPF0473 protein CLI_2624 from Clostridium botulinum (strain Langeland / NCTC 10281 / Type F).